The sequence spans 473 residues: Protein TED1 (473 aa).

At 1–8 (MLRCAVKK) the chain is on the cytoplasmic side. A helical transmembrane segment spans residues 9 to 29 (FAYFATFLTIVANIYIYTYPS). Residues 30–451 (FHPEQCSWNC…FSLCPFAIQH (422 aa)) are Lumenal-facing. Residues Asn38, Asn147, Asn229, Asn266, and Asn307 are each glycosylated (N-linked (GlcNAc...) asparagine). A helical transmembrane segment spans residues 452–472 (VWWFAKVSLLVTIFTWSSLLF). Position 473 (Val473) is a topological domain, cytoplasmic.

In terms of processing, N-glycosylated.

Its subcellular location is the endoplasmic reticulum membrane. Acts together with EMP24 and ERV25 in cargo exit from the endoplasmic reticulum. This is Protein TED1 (TED1) from Saccharomyces cerevisiae (strain ATCC 204508 / S288c) (Baker's yeast).